Consider the following 104-residue polypeptide: Circadian clock oscillator protein KaiB (104 aa).

It belongs to the KaiB family. In terms of assembly, the KaiABC complex composition changes during the circadian cycle to control KaiC phosphorylation. Complexes KaiC(6), KaiA(2-4):KaiC(6), KaiB(6):KaiC(6) and KaiC(6):KaiB(6):KaiA(12) are among the most important forms, many form cooperatively. Undergoes a major conformational rearrangment; in the free state forms homotetramers as a dimer of dimers. When bound to the CI domain of KaiC switches to a monomeric thioredoxin-fold (KaiB(fs)). KaiB(fs) binds CikA, leading it to dephosphorylate phospho-RpaA.

Its function is as follows. Key component of the KaiABC oscillator complex, which constitutes the main circadian regulator in cyanobacteria. Complex composition changes during the circadian cycle to control KaiC phosphorylation. KaiA stimulates KaiC autophosphorylation, while KaiB sequesters KaiA, leading to KaiC autodephosphorylation. Phospho-Ser-431 KaiC accumulation triggers binding of KaiB to form the KaiB(6):KaiC(6) complex, leading to changes in output regulators CikA and SasA. KaiB switches to a thioredoxin-like fold (KaiB(fs)) when bound to KaiC. KaiB(6):KaiC(6) formation exposes a site for KaiA binding that sequesters KaiA from KaiC, making the KaiC(6):KaiB(6):KaiA(12) complex that results in KaiC autodephosphorylation. In terms of biological role, a metamorphic protein which reversibly switches between an inactive tetrameric fold and a rare, thioredoxin-like monomeric fold (KaiB(fs)). KaiB(fs) binds phospho-KaiC, KaiA and CikA. KaiA and CikA compete for binding to KaiB(fs), and KaiB(fs) and SasA compete for binding to KaiC, thus the clock oscillator and output signal pathway are tightly coupled. This chain is Circadian clock oscillator protein KaiB, found in Trichodesmium erythraeum (strain IMS101).